A 341-amino-acid chain; its full sequence is Ectoine-binding periplasmic protein TeaA (341 aa).

The N-terminal stretch at 1 to 25 (MKAYKLLTTASIGALMLGMSTAAYS) is a signal peptide. Residues glutamate 34, arginine 169, asparagine 209, tryptophan 213, and phenylalanine 234 each contribute to the L-ectoine site.

It belongs to the bacterial solute-binding protein 7 family. Monomer. The complex comprises the extracytoplasmic solute receptor protein TeaA, and the two transmembrane proteins TeaB and TeaC.

It localises to the periplasm. Functionally, part of the tripartite ATP-independent periplasmic (TRAP) transport system TeaABC involved in the uptake of ectoine and hydroxyectoine in response to osmotic upshock. Probably functions as a recovery system for synthesized ectoine that leaks out of the cell. Binds ectoine with high affinity. Affinity for hydroxyectoine is approximately 20-fold lower. The chain is Ectoine-binding periplasmic protein TeaA (teaA) from Halomonas elongata (strain ATCC 33173 / DSM 2581 / NBRC 15536 / NCIMB 2198 / 1H9).